The primary structure comprises 124 residues: Small ribosomal subunit protein uS12c (124 aa).

It belongs to the universal ribosomal protein uS12 family. Part of the 30S ribosomal subunit.

The protein resides in the plastid. Its function is as follows. With S4 and S5 plays an important role in translational accuracy. Located at the interface of the 30S and 50S subunits. The chain is Small ribosomal subunit protein uS12c (rps12) from Helicosporidium sp. subsp. Simulium jonesii (Green alga).